We begin with the raw amino-acid sequence, 475 residues long: Crocetin glucosyltransferase 3 (475 aa).

H16 acts as the Proton acceptor in catalysis. H16 provides a ligand contact to an anthocyanidin. The active-site Charge relay is D123. Residues T144, A354, Q356, H371, W374, N375, S376, and E379 each coordinate UDP-alpha-D-glucose. Position 394 (A394) interacts with an anthocyanidin. 2 residues coordinate UDP-alpha-D-glucose: E395 and Q396.

The protein belongs to the UDP-glycosyltransferase family. In terms of tissue distribution, mainly expressed in stamens.

The catalysed reaction is crocetin + UDP-alpha-D-glucose = beta-D-glucosyl crocetin + UDP. The enzyme catalyses beta-D-glucosyl crocetin + UDP-alpha-D-glucose = bis(beta-D-glucosyl) crocetin + UDP. It carries out the reaction beta-D-gentiobiosyl crocetin + UDP-alpha-D-glucose = beta-D-gentiobiosyl beta-D-glucosyl crocetin + UDP. Its function is as follows. Crocetin glucosyltransferase involved in the synthesis of crocin, one of the apocarotenoids responsible for the color and bitter taste of saffron. This Crocus sativus (Saffron) protein is Crocetin glucosyltransferase 3 (GLT3).